Here is an 89-residue protein sequence, read N- to C-terminus: Small ribosomal subunit protein bS20 (89 aa).

The interval 1 to 22 is disordered; it reads MANTASARKRIRQNERRRERNV. Positions 12–22 are enriched in basic and acidic residues; it reads RQNERRRERNV.

Belongs to the bacterial ribosomal protein bS20 family.

Binds directly to 16S ribosomal RNA. This chain is Small ribosomal subunit protein bS20, found in Gluconobacter oxydans (strain 621H) (Gluconobacter suboxydans).